Consider the following 124-residue polypeptide: Late histone H2B.2.2 (124 aa).

Positions Met-1–Arg-32 are disordered. The span at Gly-10–Gly-19 shows a compositional bias: basic residues. A glycan (O-linked (GlcNAc) serine) is linked at Ser-111. A Glycyl lysine isopeptide (Lys-Gly) (interchain with G-Cter in ubiquitin) cross-link involves residue Lys-119.

The protein belongs to the histone H2B family. As to quaternary structure, the nucleosome is a histone octamer containing two molecules each of H2A, H2B, H3 and H4 assembled in one H3-H4 heterotetramer and two H2A-H2B heterodimers. The octamer wraps approximately 147 bp of DNA. Monoubiquitination of Lys-119 gives a specific tag for epigenetic transcriptional activation and is also prerequisite for histone H3 'Lys-4' and 'Lys-79' methylation. Post-translationally, glcNAcylation at Ser-111 promotes monoubiquitination of Lys-119. It fluctuates in response to extracellular glucose, and associates with transcribed genes.

It is found in the nucleus. Its subcellular location is the chromosome. In terms of biological role, core component of nucleosome. Nucleosomes wrap and compact DNA into chromatin, limiting DNA accessibility to the cellular machineries which require DNA as a template. Histones thereby play a central role in transcription regulation, DNA repair, DNA replication and chromosomal stability. DNA accessibility is regulated via a complex set of post-translational modifications of histones, also called histone code, and nucleosome remodeling. In Psammechinus miliaris (Green sea urchin), this protein is Late histone H2B.2.2.